Here is a 129-residue protein sequence, read N- to C-terminus: MAKPAARPRKKIKKTVVDGIAHIHASFNNTIVTITDRQGNALSWATSGGSGFRGSRKSTPFAAQVAAERAGQAALEYGLKNLDVNVKGPGPGRESAVRALNGCGYKIASITDVTPIPHNGCRPPKKRRV.

This sequence belongs to the universal ribosomal protein uS11 family. In terms of assembly, part of the 30S ribosomal subunit. Interacts with proteins S7 and S18. Binds to IF-3.

Located on the platform of the 30S subunit, it bridges several disparate RNA helices of the 16S rRNA. Forms part of the Shine-Dalgarno cleft in the 70S ribosome. This Pseudomonas fluorescens (strain ATCC BAA-477 / NRRL B-23932 / Pf-5) protein is Small ribosomal subunit protein uS11.